The chain runs to 418 residues: Serine hydroxymethyltransferase (418 aa).

(6S)-5,6,7,8-tetrahydrofolate-binding positions include leucine 121 and 125–127 (GHL). Lysine 230 is modified (N6-(pyridoxal phosphate)lysine). (6S)-5,6,7,8-tetrahydrofolate is bound by residues glutamate 246 and 355-357 (SPF).

Belongs to the SHMT family. Homodimer. The cofactor is pyridoxal 5'-phosphate.

It localises to the cytoplasm. It catalyses the reaction (6R)-5,10-methylene-5,6,7,8-tetrahydrofolate + glycine + H2O = (6S)-5,6,7,8-tetrahydrofolate + L-serine. It functions in the pathway one-carbon metabolism; tetrahydrofolate interconversion. It participates in amino-acid biosynthesis; glycine biosynthesis; glycine from L-serine: step 1/1. Its function is as follows. Catalyzes the reversible interconversion of serine and glycine with tetrahydrofolate (THF) serving as the one-carbon carrier. This reaction serves as the major source of one-carbon groups required for the biosynthesis of purines, thymidylate, methionine, and other important biomolecules. Also exhibits THF-independent aldolase activity toward beta-hydroxyamino acids, producing glycine and aldehydes, via a retro-aldol mechanism. The polypeptide is Serine hydroxymethyltransferase (Streptococcus pneumoniae (strain Taiwan19F-14)).